The chain runs to 123 residues: Large ribosomal subunit protein bL12 (123 aa).

The protein belongs to the bacterial ribosomal protein bL12 family. In terms of assembly, homodimer. Part of the ribosomal stalk of the 50S ribosomal subunit. Forms a multimeric L10(L12)X complex, where L10 forms an elongated spine to which 2 to 4 L12 dimers bind in a sequential fashion. Binds GTP-bound translation factors.

In terms of biological role, forms part of the ribosomal stalk which helps the ribosome interact with GTP-bound translation factors. Is thus essential for accurate translation. The chain is Large ribosomal subunit protein bL12 from Bartonella bacilliformis (strain ATCC 35685 / KC583 / Herrer 020/F12,63).